A 471-amino-acid polypeptide reads, in one-letter code: Bifunctional protein GlmU (471 aa).

Positions 1 to 232 are pyrophosphorylase; that stretch reads MSDITAVLLA…EEDALAPNDR (232 aa). UDP-N-acetyl-alpha-D-glucosamine contacts are provided by residues 9–12, Lys23, Gln73, 78–79, 102–104, Gly141, Glu157, and Asn230; these read LAAG, GT, and YGD. Mg(2+) is bound at residue Asp104. Asn230 serves as a coordination point for Mg(2+). The segment at 233–253 is linker; the sequence is VELARAEARLRRQINERHMRN. Residues 254–471 are N-acetyltransferase; it reads GVTIINPDAT…RQRKMNREGT (218 aa). Arg335 and Lys353 together coordinate UDP-N-acetyl-alpha-D-glucosamine. The Proton acceptor role is filled by His365. UDP-N-acetyl-alpha-D-glucosamine contacts are provided by Tyr368 and Asn379. Residues Ala382, 388–389, Ala425, and Arg444 contribute to the acetyl-CoA site; that span reads NY.

It in the N-terminal section; belongs to the N-acetylglucosamine-1-phosphate uridyltransferase family. The protein in the C-terminal section; belongs to the transferase hexapeptide repeat family. As to quaternary structure, homotrimer. The cofactor is Mg(2+).

The protein resides in the cytoplasm. The catalysed reaction is alpha-D-glucosamine 1-phosphate + acetyl-CoA = N-acetyl-alpha-D-glucosamine 1-phosphate + CoA + H(+). The enzyme catalyses N-acetyl-alpha-D-glucosamine 1-phosphate + UTP + H(+) = UDP-N-acetyl-alpha-D-glucosamine + diphosphate. It participates in nucleotide-sugar biosynthesis; UDP-N-acetyl-alpha-D-glucosamine biosynthesis; N-acetyl-alpha-D-glucosamine 1-phosphate from alpha-D-glucosamine 6-phosphate (route II): step 2/2. It functions in the pathway nucleotide-sugar biosynthesis; UDP-N-acetyl-alpha-D-glucosamine biosynthesis; UDP-N-acetyl-alpha-D-glucosamine from N-acetyl-alpha-D-glucosamine 1-phosphate: step 1/1. The protein operates within bacterial outer membrane biogenesis; LPS lipid A biosynthesis. Catalyzes the last two sequential reactions in the de novo biosynthetic pathway for UDP-N-acetylglucosamine (UDP-GlcNAc). The C-terminal domain catalyzes the transfer of acetyl group from acetyl coenzyme A to glucosamine-1-phosphate (GlcN-1-P) to produce N-acetylglucosamine-1-phosphate (GlcNAc-1-P), which is converted into UDP-GlcNAc by the transfer of uridine 5-monophosphate (from uridine 5-triphosphate), a reaction catalyzed by the N-terminal domain. The polypeptide is Bifunctional protein GlmU (Symbiobacterium thermophilum (strain DSM 24528 / JCM 14929 / IAM 14863 / T)).